Here is a 589-residue protein sequence, read N- to C-terminus: Mitoguardin 2 (589 aa).

The next 2 helical transmembrane spans lie at 11–31 (IIQA…TTFG) and 42–62 (PGLR…ALAA). Residues 87–134 (VPGSVLPVRRSSSAKKGYSRSRVQSPSSKSNDTLSGISSLDPSKHSSS) are disordered. Composition is skewed to low complexity over residues 106–116 (RSRVQSPSSKS) and 123–134 (ISSLDPSKHSSS).

The protein belongs to the mitoguardin family. Homodimer and heterodimer; forms heterodimers with miga1.

Its subcellular location is the mitochondrion outer membrane. Its function is as follows. Regulator of mitochondrial fusion: acts by forming homo- and heterodimers at the mitochondrial outer membrane and facilitating the formation of pld6/MitoPLD dimers. May act by regulating phospholipid metabolism via pld6/MitoPLD. In Xenopus laevis (African clawed frog), this protein is Mitoguardin 2.